A 200-amino-acid polypeptide reads, in one-letter code: Recombination protein RecR (200 aa).

The C4-type zinc finger occupies 57–72; that stretch reads CRSCRTLTEEELCPQC. One can recognise a Toprim domain in the interval 80 to 175; the sequence is TLLCVVEGPT…VASRIAHGVP (96 aa).

Belongs to the RecR family.

Its function is as follows. May play a role in DNA repair. It seems to be involved in an RecBC-independent recombinational process of DNA repair. It may act with RecF and RecO. In Pseudomonas savastanoi pv. phaseolicola (strain 1448A / Race 6) (Pseudomonas syringae pv. phaseolicola (strain 1448A / Race 6)), this protein is Recombination protein RecR.